The following is a 172-amino-acid chain: R-phycocyanin-2 beta chain (172 aa).

An N4-methylasparagine modification is found at N72. (2R,3E)-phycocyanobilin is bound at residue C82. Residue C153 participates in (2R,3E)-phycoerythrobilin binding.

The protein belongs to the phycobiliprotein family. In terms of assembly, heterodimer of an alpha and a beta chain. In terms of processing, contains two covalently linked bilin chromophores.

Its subcellular location is the cellular thylakoid membrane. Light-harvesting photosynthetic bile pigment-protein from the phycobiliprotein complex. This chain is R-phycocyanin-2 beta chain (rpcB), found in Synechococcus sp. (strain WH8020).